The following is a 425-amino-acid chain: Protein CLP1 homolog (425 aa).

ATP is bound by residues E18, K59, and D121–T126.

This sequence belongs to the Clp1 family. Clp1 subfamily.

It is found in the nucleus. Its function is as follows. Required for endonucleolytic cleavage during polyadenylation-dependent pre-mRNA 3'-end formation. This chain is Protein CLP1 homolog (cbc), found in Drosophila ananassae (Fruit fly).